The chain runs to 247 residues: Peroxisomal membrane protein 11A (247 aa).

At 1-83 the chain is on the cytoplasmic side; sequence MDAFTRFTNQ…SIHATDLVPR (83 aa). A helical transmembrane segment spans residues 84–105; that stretch reads LCLTLANLNRVIYFICDTILWV. Residues 106–219 lie on the Lumenal side of the membrane; that stretch reads RSVGLTSGIN…DQLGIYKSNP (114 aa). A helical membrane pass occupies residues 220–239; the sequence is GIIGLGGLVSSIAGMITVAY. A required for homodimerization, interaction with PEX11G, and peroxisomal localization region spans residues 220–239; that stretch reads GIIGLGGLVSSIAGMITVAY. The Cytoplasmic portion of the chain corresponds to 240–247; sequence PQMKLKTR.

This sequence belongs to the peroxin-11 family. Homodimer. Heterodimer with PEX11G. Probably interacts with COPB2 and COPA. Interacts with PEX19. Interacts with FIS1. In terms of processing, seems not to be N-glycosylated.

It is found in the peroxisome membrane. Its function is as follows. May be involved in peroxisomal proliferation and may regulate peroxisomes division. May mediate binding of coatomer proteins to the peroxisomal membrane. Promotes membrane protrusion and elongation on the peroxisomal surface. The protein is Peroxisomal membrane protein 11A (PEX11A) of Homo sapiens (Human).